A 131-amino-acid polypeptide reads, in one-letter code: Rhodopsin (131 aa).

Topologically, residues 1-16 are extracellular; it reads CGIDYYTRAPGYNNES. Residue N14 is glycosylated (N-linked (GlcNAc...) asparagine). The chain crosses the membrane as a helical span at residues 17–38; that stretch reads FVIYMFIVHFLIPLFIISFCYG. Residues 39 to 66 are Cytoplasmic-facing; sequence NLLCAVKAAAAAQEESETTQRAEREVTR. The helical transmembrane segment at 67–88 threads the bilayer; it reads MVIMMVISYLVSWVPYASVAWY. At 89–100 the chain is on the extracellular side; that stretch reads IFSNQGSEFGPV. Residues 101-122 form a helical membrane-spanning segment; the sequence is FMTIPAFFAKSSALYNPLIYVL. K110 carries the post-translational modification N6-(retinylidene)lysine. Topologically, residues 123-131 are cytoplasmic; sequence MNKQFRHCM.

It belongs to the G-protein coupled receptor 1 family. Opsin subfamily. In terms of processing, phosphorylated on some or all of the serine and threonine residues present in the C-terminal region. Post-translationally, contains one covalently linked retinal chromophore.

Its subcellular location is the membrane. It localises to the cell projection. It is found in the cilium. The protein localises to the photoreceptor outer segment. In terms of biological role, photoreceptor required for image-forming vision at low light intensity. While most salt water fish species use retinal as chromophore, most freshwater fish use 3-dehydroretinal, or a mixture of retinal and 3-dehydroretinal. Light-induced isomerization of 11-cis to all-trans retinal triggers a conformational change that activates signaling via G-proteins. Subsequent receptor phosphorylation mediates displacement of the bound G-protein alpha subunit by arrestin and terminates signaling. This chain is Rhodopsin (rho), found in Coregonus autumnalis (Arctic cisco).